Consider the following 538-residue polypeptide: Small ribosomal subunit protein uS3m (538 aa).

The segment at 111-134 (SSEGTEEERNEVRGRGAGKRVESI) is disordered. Residues 120-134 (NEVRGRGAGKRVESI) are compositionally biased toward basic and acidic residues.

The protein belongs to the universal ribosomal protein uS3 family.

The protein localises to the mitochondrion. The sequence is that of Small ribosomal subunit protein uS3m (RPS3) from Oryza sativa subsp. japonica (Rice).